The sequence spans 175 residues: Alpha-crystallin B chain (175 aa).

Position 1 is an N-acetylmethionine (Met1). Position 19 is a phosphoserine (Ser19). Ser41 carries O-linked (GlcNAc) serine glycosylation. Residues Ser45 and Ser59 each carry the phosphoserine modification. One can recognise a sHSP domain in the interval 56–164; that stretch reads RAPSWFDTGL…PERTIPITRE (109 aa). His83 provides a ligand contact to Zn(2+). Lys92 carries the N6-acetyllysine; partial modification. 4 residues coordinate Zn(2+): His104, Glu106, His111, and His119. The tract at residues 146–175 is disordered; the sequence is NGPRKQVSGPERTIPITREEKPAVTAAPKK. At Lys166 the chain carries N6-acetyllysine. Thr170 carries O-linked (GlcNAc) threonine glycosylation.

The protein belongs to the small heat shock protein (HSP20) family. Heteromer composed of three CRYAA and one CRYAB subunits. Aggregates with homologous proteins, including the small heat shock protein HSPB1, to form large heteromeric complexes. Inter-subunit bridging via zinc ions enhances stability, which is crucial as there is no protein turn over in the lens. Interacts with HSPBAP1 and TTN/titin. Interacts with TMEM109; in the cellular response to DNA damage. Interacts with DES; binds rapidly during early stages of DES filament assembly and a reduced binding seen in the later stages. Interacts with TMED10; the interaction mediates the translocation from the cytoplasm into the ERGIC (endoplasmic reticulum-Golgi intermediate compartment) and thereby secretion. Interacts with ATP6V1A and with MTOR, forming a ternary complex. As to expression, lens as well as other tissues. Expressed in myocardial tissue.

Its subcellular location is the cytoplasm. The protein resides in the nucleus. It localises to the secreted. The protein localises to the lysosome. May contribute to the transparency and refractive index of the lens. Has chaperone-like activity, preventing aggregation of various proteins under a wide range of stress conditions. In lens epithelial cells, stabilizes the ATP6V1A protein, preventing its degradation by the proteasome. This chain is Alpha-crystallin B chain, found in Homo sapiens (Human).